A 104-amino-acid chain; its full sequence is Ribonuclease P protein component 4 (104 aa).

Zn(2+)-binding residues include cysteine 57, cysteine 60, cysteine 83, and cysteine 86.

The protein belongs to the eukaryotic/archaeal RNase P protein component 4 family. As to quaternary structure, consists of a catalytic RNA component and at least 4-5 protein subunits. The cofactor is Zn(2+).

Its subcellular location is the cytoplasm. The enzyme catalyses Endonucleolytic cleavage of RNA, removing 5'-extranucleotides from tRNA precursor.. Part of ribonuclease P, a protein complex that generates mature tRNA molecules by cleaving their 5'-ends. The sequence is that of Ribonuclease P protein component 4 from Saccharolobus islandicus (strain M.16.27) (Sulfolobus islandicus).